We begin with the raw amino-acid sequence, 141 residues long: Cholinesterase (141 aa).

Asparagine 39 carries N-linked (GlcNAc...) asparagine glycosylation. 49 to 50 (GS) provides a ligand contact to substrate. Serine 131 functions as the Acyl-ester intermediate in the catalytic mechanism. The residue at position 131 (serine 131) is a Phosphoserine.

Belongs to the type-B carboxylesterase/lipase family. As to quaternary structure, homotetramer; disulfide-linked. Dimer of dimers. As to expression, present in most cells except erythrocytes.

The protein localises to the secreted. The enzyme catalyses an acylcholine + H2O = a carboxylate + choline + H(+). Functionally, esterase with broad substrate specificity. Contributes to the inactivation of the neurotransmitter acetylcholine. Can degrade neurotoxic organophosphate esters. This is Cholinesterase (BCHE) from Ovis aries (Sheep).